Consider the following 434-residue polypeptide: Tol-Pal system protein TolB (434 aa).

The signal sequence occupies residues 1-24; sequence MKFSAYLTTLFIVLFSLFIQTVQA.

The protein belongs to the TolB family. As to quaternary structure, the Tol-Pal system is composed of five core proteins: the inner membrane proteins TolA, TolQ and TolR, the periplasmic protein TolB and the outer membrane protein Pal. They form a network linking the inner and outer membranes and the peptidoglycan layer.

The protein localises to the periplasm. Its function is as follows. Part of the Tol-Pal system, which plays a role in outer membrane invagination during cell division and is important for maintaining outer membrane integrity. This Histophilus somni (strain 129Pt) (Haemophilus somnus) protein is Tol-Pal system protein TolB.